Consider the following 649-residue polypeptide: Solute carrier family 22 member 16 (649 aa).

The helical transmembrane segment at 19-39 (FQIVLYLICAYQSLSCGIHYL) threads the bilayer. Residues N65 and N108 are each glycosylated (N-linked (GlcNAc...) asparagine). A run of 5 helical transmembrane segments spans residues 156 to 176 (MIQP…SYLS), 190 to 210 (IGVF…SFMI), 214 to 234 (FLVM…MEII), 244 to 264 (IHLN…SYLL), and 268 to 288 (WLYQ…CWML). N315 carries an N-linked (GlcNAc...) asparagine glycan. A run of 6 helical transmembrane segments spans residues 356–376 (AKMT…YYMF), 389–409 (LYLL…CIWL), 417–437 (TMLL…VMPS), 445–465 (MVAL…YLYT), 475–495 (CLAV…IPFT), and 501–521 (VWIF…GLLS). A compositionally biased stretch (polar residues) spans 530–544 (TPMKSTWETTEQQVP). Disordered regions lie at residues 530 to 560 (TPMK…SFER) and 579 to 649 (SPDA…LGGF).

Belongs to the major facilitator (TC 2.A.1) superfamily. Organic cation transporter (TC 2.A.1.19) family.

It localises to the cell membrane. The catalysed reaction is (R)-carnitine(in) = (R)-carnitine(out). It carries out the reaction spermidine(in) = spermidine(out). Facilitative organic cation transporter that mediates the transport of carnitine as well as the polyamine spermidine. Mediates the partially Na(+)-dependent bidirectional transport of carnitine. May mediate L-carnitine secretion from testis epididymal epithelium into the lumen which is involved in the maturation of spermatozoa. This is Solute carrier family 22 member 16 from Mus musculus (Mouse).